The following is a 156-amino-acid chain: Large ribosomal subunit protein uL15 (156 aa).

The tract at residues 1–56 is disordered; the sequence is MDLSNLKPAEGATQAGQRLGRGEGSGRGGHSSTRGTKGQSSRSGSGTRPIWFEGGQ.

The protein belongs to the universal ribosomal protein uL15 family. In terms of assembly, part of the 50S ribosomal subunit.

In terms of biological role, binds to the 23S rRNA. This is Large ribosomal subunit protein uL15 from Salinibacter ruber (strain DSM 13855 / M31).